Reading from the N-terminus, the 1039-residue chain is L-arabinokinase (1039 aa).

Residues 662–678 form a helical membrane-spanning segment; it reads AAYVAGTILVLMIELGV. Residue 693–703 coordinates ATP; that stretch reads PEGKGVSSSAA. Asp-745 (proton acceptor) is an active-site residue.

It belongs to the GHMP kinase family.

It localises to the membrane. It catalyses the reaction L-arabinose + ATP = beta-L-arabinose 1-phosphate + ADP + H(+). Arabinose kinase. Involved in the salvage pathway which converts free L-arabinose to UDP-L-arabinose. May play a role in arabinose transport. The chain is L-arabinokinase (ARA1) from Arabidopsis thaliana (Mouse-ear cress).